Consider the following 791-residue polypeptide: Lon protease (791 aa).

Residues 13-203 (LPVLVEDELF…KLIDLIAQEI (191 aa)) form the Lon N-terminal domain. ATP is bound at residue 364-371 (GPPGVGKT). Residues 600–791 (ENQVGQVNGL…FSDVLEYTLV (192 aa)) enclose the Lon proteolytic domain. Catalysis depends on residues serine 697 and lysine 740.

Belongs to the peptidase S16 family. In terms of assembly, homohexamer. Organized in a ring with a central cavity.

It localises to the cytoplasm. It catalyses the reaction Hydrolysis of proteins in presence of ATP.. In terms of biological role, ATP-dependent serine protease that mediates the selective degradation of mutant and abnormal proteins as well as certain short-lived regulatory proteins. Required for cellular homeostasis and for survival from DNA damage and developmental changes induced by stress. Degrades polypeptides processively to yield small peptide fragments that are 5 to 10 amino acids long. Binds to DNA in a double-stranded, site-specific manner. The protein is Lon protease of Campylobacter jejuni subsp. jejuni serotype O:2 (strain ATCC 700819 / NCTC 11168).